Here is a 217-residue protein sequence, read N- to C-terminus: Nuclear transcription factor Y subunit C-3 (217 aa).

Polar residues predominate over residues 1–28; it reads MDQQGQSSAMNYGSNPYQTNAMTTTPTG. Disordered stretches follow at residues 1 to 29 and 198 to 217; these read MDQQ…PTGS and PYMG…DPDN.

The protein belongs to the NFYC/HAP5 subunit family. In terms of assembly, heterotrimeric transcription factor composed of three components, NF-YA, NF-YB and NF-YC. NF-YB and NF-YC must interact and dimerize for NF-YA association and DNA binding. In terms of tissue distribution, ubiquitous.

Its subcellular location is the nucleus. Stimulates the transcription of various genes by recognizing and binding to a CCAAT motif in promoters. This Arabidopsis thaliana (Mouse-ear cress) protein is Nuclear transcription factor Y subunit C-3 (NFYC3).